The sequence spans 448 residues: GTPase Der (448 aa).

EngA-type G domains follow at residues 2–171 and 181–364; these read FTVV…PDTQ and PKIA…EEYS. Residues 8–15, 58–62, 123–126, 187–194, 234–238, and 305–308 each bind GTP; these read GRPNVGKS, DTGGF, NKID, DTAGI, and NKWD. Positions 365–448 constitute a KH-like domain; that stretch reads KRVSTSELNR…PINIKIKQRK (84 aa).

It belongs to the TRAFAC class TrmE-Era-EngA-EngB-Septin-like GTPase superfamily. EngA (Der) GTPase family. As to quaternary structure, associates with the 50S ribosomal subunit.

GTPase that plays an essential role in the late steps of ribosome biogenesis. The sequence is that of GTPase Der from Thermodesulfovibrio yellowstonii (strain ATCC 51303 / DSM 11347 / YP87).